The primary structure comprises 55 residues: Riparin-1.5 acid (55 aa).

The signal sequence occupies residues 1–15; the sequence is MKIIVFLAVLMLVSA. Positions 16 to 41 are excised as a propeptide; sequence QVCLVSAAEMEHSSDNELSSRDLVKR. Cysteines 47 and 53 form a disulfide. The propeptide occupies 54-55; sequence NH.

In terms of tissue distribution, expressed by the skin glands.

The protein resides in the secreted. The sequence is that of Riparin-1.5 acid from Crinia riparia (Streambank froglet).